Here is an 89-residue protein sequence, read N- to C-terminus: Exodeoxyribonuclease 7 small subunit (89 aa).

Positions 1–23 are disordered; it reads MRPWRCVSMAKAPAAPSSTQPDP.

It belongs to the XseB family. Heterooligomer composed of large and small subunits.

Its subcellular location is the cytoplasm. The enzyme catalyses Exonucleolytic cleavage in either 5'- to 3'- or 3'- to 5'-direction to yield nucleoside 5'-phosphates.. Bidirectionally degrades single-stranded DNA into large acid-insoluble oligonucleotides, which are then degraded further into small acid-soluble oligonucleotides. This chain is Exodeoxyribonuclease 7 small subunit, found in Acidovorax sp. (strain JS42).